Here is a 150-residue protein sequence, read N- to C-terminus: MTTERSDPTALALRLLARREYGRRELGDKLLRAGCDAGDVALALDALAAAGYQDDARYVEMLTRTRVRQGHGPLRLRQDLQRAGIEVGADPEIDWLQQAQAVCRKRFGNTPPADARDYARRARFLAGRGFTGETIRQVLGAGRERDFAAD.

It belongs to the RecX family.

The protein resides in the cytoplasm. Its function is as follows. Modulates RecA activity. This Acidithiobacillus ferrooxidans (strain ATCC 23270 / DSM 14882 / CIP 104768 / NCIMB 8455) (Ferrobacillus ferrooxidans (strain ATCC 23270)) protein is Regulatory protein RecX.